The following is a 309-amino-acid chain: Foldase protein PrsA 2 (309 aa).

A signal peptide spans 1 to 20 (MKYRLIGVGASLVVAVMLTG). A lipid anchor (N-palmitoyl cysteine) is attached at Cys21. Residue Cys21 is the site of S-diacylglycerol cysteine attachment. The PpiC domain occupies 137–232 (MPMTTVQHIA…TADTKDKPTY (96 aa)).

This sequence belongs to the PrsA family.

It is found in the cell membrane. The enzyme catalyses [protein]-peptidylproline (omega=180) = [protein]-peptidylproline (omega=0). In terms of biological role, plays a major role in protein secretion by helping the post-translocational extracellular folding of several secreted proteins. This chain is Foldase protein PrsA 2 (prsA2), found in Lactiplantibacillus plantarum (strain ATCC BAA-793 / NCIMB 8826 / WCFS1) (Lactobacillus plantarum).